The primary structure comprises 849 residues: Autoinducer 1 sensor kinase/phosphatase LuxN (849 aa).

Transmembrane regions (helical) follow at residues 9–29 (IVYA…MWLF), 41–61 (VIFG…IAWI), 160–180 (SYFF…LVAM), 196–216 (IAGI…MTYF), 220–242 (FSLT…YALL), 251–275 (YIAY…AIFI), and 283–301 (WLIA…QLLY). A Histidine kinase domain is found at 468-683 (SIAHEMRNPL…EFHLYFPVVP (216 aa)). His-471 carries the phosphohistidine; by autocatalysis modification. The Response regulatory domain maps to 722–835 (TVLIVDDKEV…ALRHVLGNWL (114 aa)). Asp-771 is subject to 4-aspartylphosphate.

The protein localises to the cell inner membrane. It carries out the reaction ATP + protein L-histidine = ADP + protein N-phospho-L-histidine.. At low cell density, in the absence of AI-1 (autoinducer 1), LuxN has a kinase activity and autophosphorylates on His-471. The phosphoryl group is then transferred on Asp-771 of the response regulator domain. The phosphoryl group is transferred to LuxU, and ultimately to LuxO. At high cell density, in the presence of AI-1, the kinase activity is inactivated, and the response regulator domain has a phosphatase activity. LuxN phosphatase acts on itself. As LuxU could function to establish an equilibrium between the aspartyl-phosphate of LuxN and the aspartyl-phosphate of LuxO, LuxU transfers phosphate from LuxO to LuxN and finally phosphate is drained from the system. The sequence is that of Autoinducer 1 sensor kinase/phosphatase LuxN (luxN) from Vibrio harveyi (Beneckea harveyi).